Consider the following 262-residue polypeptide: Acyl-[acyl-carrier-protein]--UDP-N-acetylglucosamine O-acyltransferase (262 aa).

It belongs to the transferase hexapeptide repeat family. LpxA subfamily. In terms of assembly, homotrimer.

It localises to the cytoplasm. It catalyses the reaction a (3R)-hydroxyacyl-[ACP] + UDP-N-acetyl-alpha-D-glucosamine = a UDP-3-O-[(3R)-3-hydroxyacyl]-N-acetyl-alpha-D-glucosamine + holo-[ACP]. Its pathway is glycolipid biosynthesis; lipid IV(A) biosynthesis; lipid IV(A) from (3R)-3-hydroxytetradecanoyl-[acyl-carrier-protein] and UDP-N-acetyl-alpha-D-glucosamine: step 1/6. Functionally, involved in the biosynthesis of lipid A, a phosphorylated glycolipid that anchors the lipopolysaccharide to the outer membrane of the cell. The chain is Acyl-[acyl-carrier-protein]--UDP-N-acetylglucosamine O-acyltransferase from Vibrio campbellii (strain ATCC BAA-1116).